The sequence spans 835 residues: Serine/threonine-protein kinase TNNI3K (835 aa).

Positions 21–51 (SESYVITIERLEDDLQIKEKELTELRNIFGS) form a coiled coil. ANK repeat units lie at residues 66–96 (NGLS…RPSR), 100–129 (NGFT…DIQQ), 133–162 (GGLT…NVNI), 166–195 (VFFT…DVNV), 199–228 (VGDR…KADV), 234–263 (EDHV…EVQP), 269–298 (YGDT…TESL), 304–335 (FSET…NINH), 339–368 (DGHT…DMNL), and 381–410 (DEQT…PQDE). The 261-residue stretch at 463–723 (IEFHEIIGSG…EVVMKLEECL (261 aa)) folds into the Protein kinase domain. ATP contacts are provided by residues 469 to 477 (IGSGSFGKV) and Lys490. Asp588 functions as the Proton acceptor in the catalytic mechanism. Residues 732–746 (ASSNSSGSLSPSSSS) are compositionally biased toward low complexity. The disordered stretch occupies residues 732–751 (ASSNSSGSLSPSSSSDCLVN).

The protein belongs to the protein kinase superfamily. TKL Ser/Thr protein kinase family. MAP kinase kinase kinase subfamily. In terms of assembly, interacts with TNNI3, ACTC1, ACTA1, MYBPC3, AIP, FABP3 and HADHB. Requires Mg(2+) as cofactor. Autophosphorylated. Highly expressed in both adult and fetal heart.

It localises to the nucleus. Its subcellular location is the cytoplasm. The enzyme catalyses L-seryl-[protein] + ATP = O-phospho-L-seryl-[protein] + ADP + H(+). It catalyses the reaction L-threonyl-[protein] + ATP = O-phospho-L-threonyl-[protein] + ADP + H(+). In terms of biological role, may play a role in cardiac physiology. The chain is Serine/threonine-protein kinase TNNI3K from Homo sapiens (Human).